A 485-amino-acid polypeptide reads, in one-letter code: Adenosylhomocysteinase (485 aa).

The substrate site is built by threonine 64, aspartate 139, and glutamate 205. 206–208 contacts NAD(+); it reads TTT. The substrate site is built by lysine 235 and aspartate 239. NAD(+) contacts are provided by residues asparagine 240, 269-274, glutamate 292, asparagine 327, 348-350, and asparagine 397; these read GYGDVG and IGH.

It belongs to the adenosylhomocysteinase family. The cofactor is NAD(+).

It catalyses the reaction S-adenosyl-L-homocysteine + H2O = L-homocysteine + adenosine. It participates in amino-acid biosynthesis; L-homocysteine biosynthesis; L-homocysteine from S-adenosyl-L-homocysteine: step 1/1. Adenosylhomocysteine is a competitive inhibitor of S-adenosyl-L-methionine-dependent methyl transferase reactions; therefore adenosylhomocysteinase may play a key role in the control of methylations via regulation of the intracellular concentration of adenosylhomocysteine. The sequence is that of Adenosylhomocysteinase (SAHH) from Medicago sativa (Alfalfa).